Consider the following 444-residue polypeptide: UDP-N-acetylmuramate--L-alanine ligase (444 aa).

ATP is bound at residue 110-116 (GAHGKTS).

Belongs to the MurCDEF family.

Its subcellular location is the cytoplasm. It carries out the reaction UDP-N-acetyl-alpha-D-muramate + L-alanine + ATP = UDP-N-acetyl-alpha-D-muramoyl-L-alanine + ADP + phosphate + H(+). It functions in the pathway cell wall biogenesis; peptidoglycan biosynthesis. Functionally, cell wall formation. In Streptococcus sanguinis (strain SK36), this protein is UDP-N-acetylmuramate--L-alanine ligase.